A 446-amino-acid polypeptide reads, in one-letter code: tRNA-2-methylthio-N(6)-dimethylallyladenosine synthase (446 aa).

The region spanning Arg5–Ser121 is the MTTase N-terminal domain. Residues Cys14, Cys50, Cys84, Cys157, Cys161, and Cys164 each contribute to the [4Fe-4S] cluster site. The 231-residue stretch at Arg143–Glu373 folds into the Radical SAM core domain. Residues Arg376–Gly439 form the TRAM domain.

Belongs to the methylthiotransferase family. MiaB subfamily. In terms of assembly, monomer. Requires [4Fe-4S] cluster as cofactor.

The protein localises to the cytoplasm. The enzyme catalyses N(6)-dimethylallyladenosine(37) in tRNA + (sulfur carrier)-SH + AH2 + 2 S-adenosyl-L-methionine = 2-methylsulfanyl-N(6)-dimethylallyladenosine(37) in tRNA + (sulfur carrier)-H + 5'-deoxyadenosine + L-methionine + A + S-adenosyl-L-homocysteine + 2 H(+). Functionally, catalyzes the methylthiolation of N6-(dimethylallyl)adenosine (i(6)A), leading to the formation of 2-methylthio-N6-(dimethylallyl)adenosine (ms(2)i(6)A) at position 37 in tRNAs that read codons beginning with uridine. The sequence is that of tRNA-2-methylthio-N(6)-dimethylallyladenosine synthase from Chlorobium luteolum (strain DSM 273 / BCRC 81028 / 2530) (Pelodictyon luteolum).